The primary structure comprises 639 residues: Threonine--tRNA ligase (639 aa).

The TGS domain maps to Met-1–Thr-61. The segment at Asp-242–Pro-533 is catalytic. Residues Cys-333, His-384, and His-510 each contribute to the Zn(2+) site.

The protein belongs to the class-II aminoacyl-tRNA synthetase family. As to quaternary structure, homodimer. The cofactor is Zn(2+).

The protein resides in the cytoplasm. It carries out the reaction tRNA(Thr) + L-threonine + ATP = L-threonyl-tRNA(Thr) + AMP + diphosphate + H(+). In terms of biological role, catalyzes the attachment of threonine to tRNA(Thr) in a two-step reaction: L-threonine is first activated by ATP to form Thr-AMP and then transferred to the acceptor end of tRNA(Thr). Also edits incorrectly charged L-seryl-tRNA(Thr). The polypeptide is Threonine--tRNA ligase (Verminephrobacter eiseniae (strain EF01-2)).